Reading from the N-terminus, the 196-residue chain is MPPPIGYCPAVGFGGRHERSDAELLAAHVAGDRYAFDQLFRRHHRQLHRLARLTSRTSEDADDALQDAMLSAHRGAGSFRYDAAVSSWLHRIVVNACLDRLRRAKAHPTAPLEDVYPVADRTAQVETAIAVQRALMRLPVEQRAAVVAVDMQGYSIADTARMLGVAEGTVKSRCARARARLARLLGYLNTGVNIRR.

Residues 39 to 105 (LFRRHHRQLH…ACLDRLRRAK (67 aa)) form a sigma-70 factor domain-2 region. A Polymerase core binding motif is present at residues 63–66 (DALQ). Residues 130-181 (AVQRALMRLPVEQRAAVVAVDMQGYSIADTARMLGVAEGTVKSRCARARARL) form a sigma-70 factor domain-4 region. The segment at residues 156–175 (IADTARMLGVAEGTVKSRCA) is a DNA-binding region (H-T-H motif).

The protein belongs to the sigma-70 factor family. ECF subfamily. Interacts transiently with the RNA polymerase catalytic core formed by RpoA, RpoB, RpoC and RpoZ (2 alpha, 1 beta, 1 beta' and 1 omega subunit) to form the RNA polymerase holoenzyme that can initiate transcription. Interacts (via sigma-70 factor domain-4) with anti-sigma-M factor RsmA (AC L7N5D7).

In terms of biological role, sigma factors are initiation factors that promote the attachment of RNA polymerase to specific initiation sites and are then released. Extracytoplasmic function (ECF) sigma factors are held in an inactive form by an anti-sigma factor (RsaM, AC L7N5D7) until released by regulated intramembrane proteolysis. This sigma factor is required for the synthesis of surface or secreted molecules. The protein is ECF RNA polymerase sigma factor SigM (sigM) of Mycobacterium tuberculosis (strain ATCC 25618 / H37Rv).